Here is a 126-residue protein sequence, read N- to C-terminus: MTRIKRGSIARRRRAKTRLFASGARGAHSRLTRLIAQQTIRALASAHRDRDKKKRDFRRLWITRINGVIRQNVLSYSYSQLITNLKKEQLLLNRKMLAQIAISNRNCLSIIYSAIIILETKEEGQK.

This sequence belongs to the bacterial ribosomal protein bL20 family.

It localises to the plastid. It is found in the chloroplast. Functionally, binds directly to 23S ribosomal RNA and is necessary for the in vitro assembly process of the 50S ribosomal subunit. It is not involved in the protein synthesizing functions of that subunit. In Pelargonium hortorum (Common geranium), this protein is Large ribosomal subunit protein bL20c.